The primary structure comprises 780 residues: LPS-assembly protein LptD (780 aa).

The N-terminal stretch at 1–24 is a signal peptide; sequence MKKRFPTLLATLIWTALYSQHTLA.

This sequence belongs to the LptD family. In terms of assembly, component of the lipopolysaccharide transport and assembly complex. Interacts with LptE and LptA.

It is found in the cell outer membrane. Its function is as follows. Together with LptE, is involved in the assembly of lipopolysaccharide (LPS) at the surface of the outer membrane. The chain is LPS-assembly protein LptD from Yersinia pseudotuberculosis serotype I (strain IP32953).